A 200-amino-acid chain; its full sequence is Cytochrome c biogenesis ATP-binding export protein CcmA (200 aa).

The ABC transporter domain occupies 1–200 (MRLSGRGLRC…TREMRIGAAA (200 aa)). 35–42 (GRNGAGKT) serves as a coordination point for ATP.

It belongs to the ABC transporter superfamily. CcmA exporter (TC 3.A.1.107) family. As to quaternary structure, the complex is composed of two ATP-binding proteins (CcmA) and two transmembrane proteins (CcmB).

It localises to the cell inner membrane. It carries out the reaction heme b(in) + ATP + H2O = heme b(out) + ADP + phosphate + H(+). Its function is as follows. Part of the ABC transporter complex CcmAB involved in the biogenesis of c-type cytochromes; once thought to export heme, this seems not to be the case, but its exact role is uncertain. Responsible for energy coupling to the transport system. In Rhodopseudomonas palustris (strain HaA2), this protein is Cytochrome c biogenesis ATP-binding export protein CcmA.